Consider the following 287-residue polypeptide: Ret finger protein-like 4A-like protein 1 (287 aa).

The RING-type; degenerate zinc-finger motif lies at 11 to 53; sequence CPVCLKDLEEAVQLKCGYACCLQCLNSLQKEPDGEGLLCRFCS. In terms of domain architecture, B30.2/SPRY spans 78–276; it reads EPKLKSVLTM…LSICSVINPS (199 aa).

This is Ret finger protein-like 4A-like protein 1 (RFPL4AL1) from Homo sapiens (Human).